Here is a 152-residue protein sequence, read N- to C-terminus: UPF0225 protein YchJ (152 aa).

This sequence belongs to the UPF0225 family.

The sequence is that of UPF0225 protein YchJ from Escherichia coli O6:K15:H31 (strain 536 / UPEC).